The sequence spans 312 residues: Serine protease 48 (312 aa).

An N-terminal signal peptide occupies residues 1–22; it reads MGPAGLKVLLLLFLGAFQGSFT. The Peptidase S1 domain occupies 40–276; sequence IVGGQDAALG…YQKWISAIIS (237 aa). C65 and C81 are oxidised to a cystine. Catalysis depends on charge relay system residues H80 and D126. N149 carries an N-linked (GlcNAc...) asparagine glycan. 3 disulfide bridges follow: C160/C235, C190/C214, and C225/C253. The active-site Charge relay system is the S229. The N-linked (GlcNAc...) asparagine glycan is linked to N263.

It belongs to the peptidase S1 family.

The protein resides in the secreted. The polypeptide is Serine protease 48 (Prss48) (Mus musculus (Mouse)).